Here is a 390-residue protein sequence, read N- to C-terminus: Purine permease 21 (390 aa).

A disordered region spans residues 12-34 (QQGKEPIPTDQDERSSVSGSQTK). Helical transmembrane passes span 44 to 64 (WLRV…ATIL), 78 to 98 (LATV…LLSV), 118 to 138 (LVYI…SIGL), 140 to 160 (YLPV…TAFF), 169 to 189 (LTPI…LLAF), 204 to 224 (YVKG…LLSL), 241 to 261 (VINM…VGLF), 287 to 307 (LVWT…LIFE), 312 to 332 (FSNA…VIIF), and 336 to 356 (MNGL…SYVY). The segment at 367-390 (KSNEIPTTESPDRPEAEGSSEQSK) is disordered.

This sequence belongs to the purine permeases (TC 2.A.7.14) family. Expressed in mesophyll cells.

It localises to the membrane. This is Purine permease 21 from Arabidopsis thaliana (Mouse-ear cress).